The chain runs to 325 residues: MTAPGSASHDAAHDPAHALDLDRLLASAADDGGGQVDDSIPQLAETDPSLAGIALVTPDGRTHAAGDSAHAFSIQSAVKPFLFALALADTDGAALDAVGIEPTGEAFDAIKLESGTGRPPNPMVNAGAILTASLVRGSTLEERTARILAGLSAFAGRDLEVDEDVAECEQLLGDRNHALAHLMRSEGTLHVSADDAVAAYARACAVLVTPEILAAMGATLACGGRNPLTGSRVVSREVARDSVSVMATCGVYDGSGRWMRRVGVPAKSSVSGAIVLASPGRLGAAVFSPPLDDQGTSVRGAVLAQRLADELGLHAFGGTGGRERA.

Substrate-binding residues include S76, N125, E169, N176, Y200, Y252, and V270.

It belongs to the glutaminase family. As to quaternary structure, homotetramer.

The catalysed reaction is L-glutamine + H2O = L-glutamate + NH4(+). The chain is Glutaminase from Clavibacter michiganensis subsp. michiganensis (strain NCPPB 382).